The primary structure comprises 181 residues: ATP-dependent protease subunit HslV (181 aa).

Thr5 is a catalytic residue. Na(+)-binding residues include Ser162, Cys165, and Thr168.

Belongs to the peptidase T1B family. HslV subfamily. In terms of assembly, a double ring-shaped homohexamer of HslV is capped on each side by a ring-shaped HslU homohexamer. The assembly of the HslU/HslV complex is dependent on binding of ATP.

It is found in the cytoplasm. It carries out the reaction ATP-dependent cleavage of peptide bonds with broad specificity.. Allosterically activated by HslU binding. Functionally, protease subunit of a proteasome-like degradation complex believed to be a general protein degrading machinery. The polypeptide is ATP-dependent protease subunit HslV (Campylobacter hominis (strain ATCC BAA-381 / DSM 21671 / CCUG 45161 / LMG 19568 / NCTC 13146 / CH001A)).